The primary structure comprises 233 residues: Putative peroxiredoxin (233 aa).

Residues 41 to 200 form the Thioredoxin domain; sequence AQIGKEAPEF…TIRIVKAIQF (160 aa). Cys-87 serves as the catalytic Cysteine sulfenic acid (-SOH) intermediate.

Belongs to the peroxiredoxin family. AhpC/Prx1 subfamily. As to quaternary structure, homodimer; disulfide-linked, upon oxidation.

The protein localises to the cell membrane. It carries out the reaction a hydroperoxide + [thioredoxin]-dithiol = an alcohol + [thioredoxin]-disulfide + H2O. Functionally, thiol-specific peroxidase that catalyzes the reduction of hydrogen peroxide and organic hydroperoxides to water and alcohols, respectively. Plays a role in cell protection against oxidative stress by detoxifying peroxides and as sensor of hydrogen peroxide-mediated signaling events. In Entamoeba histolytica (strain ATCC 30459 / HM-1:IMSS / ABRM), this protein is Putative peroxiredoxin.